The sequence spans 47 residues: Diuretic hormone 2 (47 aa).

The protein belongs to the sauvagine/corticotropin-releasing factor/urotensin I family.

It localises to the secreted. Functionally, stimulates fluid secretion by the Malpighian tubules. Increases cyclic AMP production in Malpighian tubules. The sequence is that of Diuretic hormone 2 from Tenebrio molitor (Yellow mealworm beetle).